A 61-amino-acid polypeptide reads, in one-letter code: Small ribosomal subunit protein uS14 (61 aa).

4 residues coordinate Zn(2+): C24, C27, C40, and C43.

It belongs to the universal ribosomal protein uS14 family. Zinc-binding uS14 subfamily. As to quaternary structure, part of the 30S ribosomal subunit. Contacts proteins S3 and S10. It depends on Zn(2+) as a cofactor.

In terms of biological role, binds 16S rRNA, required for the assembly of 30S particles and may also be responsible for determining the conformation of the 16S rRNA at the A site. This chain is Small ribosomal subunit protein uS14, found in Campylobacter concisus (strain 13826).